Reading from the N-terminus, the 275-residue chain is Urease accessory protein UreD (275 aa).

Belongs to the UreD family. In terms of assembly, ureD, UreF and UreG form a complex that acts as a GTP-hydrolysis-dependent molecular chaperone, activating the urease apoprotein by helping to assemble the nickel containing metallocenter of UreC. The UreE protein probably delivers the nickel.

Its subcellular location is the cytoplasm. Functionally, required for maturation of urease via the functional incorporation of the urease nickel metallocenter. The sequence is that of Urease accessory protein UreD from Cereibacter sphaeroides (strain ATCC 17025 / ATH 2.4.3) (Rhodobacter sphaeroides).